Reading from the N-terminus, the 53-residue chain is Large ribosomal subunit protein bL33B (53 aa).

The protein belongs to the bacterial ribosomal protein bL33 family.

This chain is Large ribosomal subunit protein bL33B, found in Sorangium cellulosum (strain So ce56) (Polyangium cellulosum (strain So ce56)).